The chain runs to 153 residues: Ribonuclease VapC6 (153 aa).

Residues 6-152 form the PINc domain; it reads VFIDSSVMVG…EKVDFIEIIK (147 aa). Residues Asp9 and Asp120 each contribute to the Mg(2+) site.

Belongs to the PINc/VapC protein family. Requires Mg(2+) as cofactor.

In terms of biological role, toxic component of a type II toxin-antitoxin (TA) system. An RNase. The protein is Ribonuclease VapC6 of Methanocaldococcus jannaschii (strain ATCC 43067 / DSM 2661 / JAL-1 / JCM 10045 / NBRC 100440) (Methanococcus jannaschii).